We begin with the raw amino-acid sequence, 542 residues long: Phosphoacetylglucosamine mutase (542 aa).

Met1 bears the N-acetylmethionine mark. Residue Thr62 is modified to Phosphothreonine. The active-site Phosphoserine intermediate is Ser64. Positions 64, 276, 278, and 280 each coordinate Mg(2+). Ser64 carries the post-translational modification Phosphoserine. Substrate contacts are provided by residues 370-372 (EAN), 496-500 (RPSGT), and Arg505.

This sequence belongs to the phosphohexose mutase family. Mg(2+) serves as cofactor. In terms of tissue distribution, found in many tissues except lung. Relatively high expression in pancreas, heart, liver, and placenta, and relatively low expression in brain, skeletal muscle and kidney.

It carries out the reaction N-acetyl-alpha-D-glucosamine 1-phosphate = N-acetyl-D-glucosamine 6-phosphate. It functions in the pathway nucleotide-sugar biosynthesis; UDP-N-acetyl-alpha-D-glucosamine biosynthesis; N-acetyl-alpha-D-glucosamine 1-phosphate from alpha-D-glucosamine 6-phosphate (route I): step 2/2. Its function is as follows. Catalyzes the conversion of GlcNAc-6-P into GlcNAc-1-P during the synthesis of uridine diphosphate/UDP-GlcNAc, a sugar nucleotide critical to multiple glycosylation pathways including protein N- and O-glycosylation. The sequence is that of Phosphoacetylglucosamine mutase from Homo sapiens (Human).